The primary structure comprises 229 residues: 2-C-methyl-D-erythritol 4-phosphate cytidylyltransferase (229 aa).

It belongs to the IspD/TarI cytidylyltransferase family. IspD subfamily.

The enzyme catalyses 2-C-methyl-D-erythritol 4-phosphate + CTP + H(+) = 4-CDP-2-C-methyl-D-erythritol + diphosphate. Its pathway is isoprenoid biosynthesis; isopentenyl diphosphate biosynthesis via DXP pathway; isopentenyl diphosphate from 1-deoxy-D-xylulose 5-phosphate: step 2/6. Catalyzes the formation of 4-diphosphocytidyl-2-C-methyl-D-erythritol from CTP and 2-C-methyl-D-erythritol 4-phosphate (MEP). The sequence is that of 2-C-methyl-D-erythritol 4-phosphate cytidylyltransferase from Neisseria meningitidis serogroup C / serotype 2a (strain ATCC 700532 / DSM 15464 / FAM18).